Consider the following 152-residue polypeptide: Superoxide dismutase [Cu-Zn] (152 aa).

Cys-7 is lipidated: S-palmitoyl cysteine. The Cu cation site is built by His-47, His-49, and His-64. Cys-58 and Cys-146 are oxidised to a cystine. The Zn(2+) site is built by His-64, His-72, His-81, and Asp-84. His-120 provides a ligand contact to Cu cation.

It belongs to the Cu-Zn superoxide dismutase family. As to quaternary structure, homodimer. The cofactor is Cu cation. Requires Zn(2+) as cofactor.

It is found in the cytoplasm. Its subcellular location is the nucleus. It catalyses the reaction 2 superoxide + 2 H(+) = H2O2 + O2. Functionally, destroys radicals which are normally produced within the cells and which are toxic to biological systems. The chain is Superoxide dismutase [Cu-Zn] (sod1) from Xiphias gladius (Swordfish).